A 333-amino-acid polypeptide reads, in one-letter code: Fructose-1,6-bisphosphatase class 1 1 (333 aa).

Positions 81, 100, 102, and 103 each coordinate Mg(2+). Substrate-binding positions include 103-106 and N191; that span reads DGSS. A Mg(2+)-binding site is contributed by E263.

Belongs to the FBPase class 1 family. In terms of assembly, homotetramer. Requires Mg(2+) as cofactor.

It localises to the cytoplasm. The enzyme catalyses beta-D-fructose 1,6-bisphosphate + H2O = beta-D-fructose 6-phosphate + phosphate. It participates in carbohydrate biosynthesis; Calvin cycle. The polypeptide is Fructose-1,6-bisphosphatase class 1 1 (Cereibacter sphaeroides (strain ATCC 17025 / ATH 2.4.3) (Rhodobacter sphaeroides)).